The sequence spans 423 residues: Adenylosuccinate synthetase (423 aa).

GTP-binding positions include 12–18 and 40–42; these read GDEGKGK and GHT. Asp13 functions as the Proton acceptor in the catalytic mechanism. Residues Asp13 and Gly40 each contribute to the Mg(2+) site. IMP-binding positions include 13–16, 38–41, Thr128, Arg142, Gln223, Thr238, and Arg302; these read DEGK and NAGH. His41 functions as the Proton donor in the catalytic mechanism. 298-304 contributes to the substrate binding site; sequence TTTGRPR. Residues Arg304, 330-332, and 412-414 contribute to the GTP site; these read RLD and CIG.

It belongs to the adenylosuccinate synthetase family. In terms of assembly, homodimer. It depends on Mg(2+) as a cofactor.

Its subcellular location is the cytoplasm. The enzyme catalyses IMP + L-aspartate + GTP = N(6)-(1,2-dicarboxyethyl)-AMP + GDP + phosphate + 2 H(+). It functions in the pathway purine metabolism; AMP biosynthesis via de novo pathway; AMP from IMP: step 1/2. Functionally, plays an important role in the de novo pathway of purine nucleotide biosynthesis. Catalyzes the first committed step in the biosynthesis of AMP from IMP. The sequence is that of Adenylosuccinate synthetase from Dehalococcoides mccartyi (strain ATCC BAA-2100 / JCM 16839 / KCTC 5957 / BAV1).